Reading from the N-terminus, the 162-residue chain is uncharacterized protein (162 aa).

Residues 65 to 76 (EEKPLEVAQDRN) are compositionally biased toward basic and acidic residues. Residues 65–93 (EEKPLEVAQDRNNKRKAPSHLEPAHDFIS) form a disordered region.

This is an uncharacterized protein from Bacillus subtilis (strain 168).